Consider the following 578-residue polypeptide: Arginine--tRNA ligase (578 aa).

A 'HIGH' region motif is present at residues 123–133 (PNLAKEMHVGH).

Belongs to the class-I aminoacyl-tRNA synthetase family. In terms of assembly, monomer.

The protein resides in the cytoplasm. It catalyses the reaction tRNA(Arg) + L-arginine + ATP = L-arginyl-tRNA(Arg) + AMP + diphosphate. The protein is Arginine--tRNA ligase of Hahella chejuensis (strain KCTC 2396).